A 132-amino-acid chain; its full sequence is Large ribosomal subunit protein bL12 (132 aa).

Positions 102 to 126 (APKPIKEATNKDDAESIKKQLEEAG) are enriched in basic and acidic residues. A disordered region spans residues 102 to 132 (APKPIKEATNKDDAESIKKQLEEAGAKASVK).

This sequence belongs to the bacterial ribosomal protein bL12 family. In terms of assembly, homodimer. Part of the ribosomal stalk of the 50S ribosomal subunit. Forms a multimeric L10(L12)X complex, where L10 forms an elongated spine to which 2 to 4 L12 dimers bind in a sequential fashion. Binds GTP-bound translation factors.

Forms part of the ribosomal stalk which helps the ribosome interact with GTP-bound translation factors. Is thus essential for accurate translation. The chain is Large ribosomal subunit protein bL12 from Rippkaea orientalis (strain PCC 8801 / RF-1) (Cyanothece sp. (strain PCC 8801)).